The sequence spans 710 residues: Protein phosphatase 1 regulatory subunit 37 (710 aa).

The segment covering 1 to 12 (MEIPPQEAPPGP) has biased composition (pro residues). The segment at 1-46 (MEIPPQEAPPGPGADADADAEAEEAPAEAGSSSGASPPTDGRLKAA) is disordered. Residues 16–26 (ADADAEAEEAP) show a composition bias toward acidic residues. Positions 27–38 (AEAGSSSGASPP) are enriched in low complexity. A phosphoserine mark is found at serine 54 and serine 60. 5 LRR repeats span residues 224 to 244 (SLAVLHLENASLSGRPLMLLA), 252 to 273 (NLQELYLADNKLNGLQDSAQLG), 281 to 301 (SLQILDLRNNHVLDSGLAYIC), 310 to 330 (GLVTLVLWNNQLTHTGMAFLG), and 338 to 358 (SLETLNLGHNPIGNEGVRNLK). The disordered stretch occupies residues 487-677 (PLEESGDLPA…APPGLEAKGS (191 aa)). A compositionally biased stretch (acidic residues) spans 512–531 (SDSDSDSDREEQEEEEEDQS). A compositionally biased stretch (low complexity) spans 543 to 565 (SSSAPCPALLPSTDSLGPGDKSP). At serine 581 the chain carries Phosphoserine. Residues 603–624 (PPVPPTSVSSPPPSPPSPPASP) are compositionally biased toward pro residues. Polar residues predominate over residues 637–649 (SEAQPQTEPSQAG). Low complexity predominate over residues 656-676 (LKPEFALALAPEAPPGLEAKG).

It belongs to the PPP1R37 family. As to quaternary structure, interacts with PPP1CA.

Functionally, inhibits phosphatase activity of protein phosphatase 1 (PP1) complexes. The sequence is that of Protein phosphatase 1 regulatory subunit 37 (Ppp1r37) from Rattus norvegicus (Rat).